The following is a 369-amino-acid chain: Molybdenum import ATP-binding protein ModC (369 aa).

In terms of domain architecture, ABC transporter spans 3–246 (TRPEQASKDT…LDLPLAHGDS (244 aa)). 44-51 (GPSGSGKT) contributes to the ATP binding site. Positions 305–369 (DTSILNILPA…AQIKGVAILG (65 aa)) constitute a Mop domain.

The protein belongs to the ABC transporter superfamily. Molybdate importer (TC 3.A.1.8) family. The complex is composed of two ATP-binding proteins (ModC), two transmembrane proteins (ModB) and a solute-binding protein (ModA).

The protein resides in the cell inner membrane. The catalysed reaction is molybdate(out) + ATP + H2O = molybdate(in) + ADP + phosphate + H(+). Its function is as follows. Part of the ABC transporter complex ModABC involved in molybdenum import. Responsible for energy coupling to the transport system. The polypeptide is Molybdenum import ATP-binding protein ModC (Albidiferax ferrireducens (strain ATCC BAA-621 / DSM 15236 / T118) (Rhodoferax ferrireducens)).